The following is a 726-amino-acid chain: Uracil catabolism protein 2 (726 aa).

Residues 24-53 (CGVCRKFKTRCDFEPLVGKCHRCNVLRLEC) constitute a DNA-binding region (zn(2)-C6 fungal-type). Disordered regions lie at residues 152-183 (AGMG…FVNG) and 629-681 (SGRL…SGAD). Over residues 161–170 (YDDDDDGDDD) the composition is skewed to acidic residues. Over residues 640–679 (RGSPSMTPGFQQSVQSSSALQGSKAGSPQSARSVNSQGSG) the composition is skewed to polar residues.

This sequence belongs to the URC2 family.

The protein localises to the nucleus. Probable transcriptional activator involved in uracil catabolism. The polypeptide is Uracil catabolism protein 2 (URC2) (Lachancea kluyveri (Yeast)).